A 362-amino-acid chain; its full sequence is MERITVTLGERSYPITIAAGLFNDPASFLPLKAGDQAMLVTNETLAPLYLDKIRHLLEQAGVNVDSVILPDGEQYKSLAVLETVFTALLQKPHGRDTTLLALGGGVVGDLTGFAAASYQRGVRFIQIPTTLLSQVDSSVGGKTAVNHPLGKNMIGAFYQPASVVVDLDCLNTLPQRELASGLAEVIKYGIILDGEFFSWLEDNMDALLNLDGKALAYCIRRCCELKAEVVAADERETGLRALLNLGHTFGHAIEAEMGYGNWLHGEAVAAGMVMAARTSERLGQFKQEETQRIITLLERAGLPVTGPREMSSHAYLPHMMRDKKVLAGEMRLVLPLAIGKSEVRGGVPHDVVLGAIADCQQA.

NAD(+) is bound by residues 71–76 (DGEQYK), 105–109 (GVVGD), 129–130 (TT), lysine 142, lysine 151, and 169–172 (CLNT). The Zn(2+) site is built by glutamate 184, histidine 247, and histidine 264.

It belongs to the sugar phosphate cyclases superfamily. Dehydroquinate synthase family. The cofactor is Co(2+). It depends on Zn(2+) as a cofactor. NAD(+) is required as a cofactor.

It localises to the cytoplasm. It catalyses the reaction 7-phospho-2-dehydro-3-deoxy-D-arabino-heptonate = 3-dehydroquinate + phosphate. Its pathway is metabolic intermediate biosynthesis; chorismate biosynthesis; chorismate from D-erythrose 4-phosphate and phosphoenolpyruvate: step 2/7. Functionally, catalyzes the conversion of 3-deoxy-D-arabino-heptulosonate 7-phosphate (DAHP) to dehydroquinate (DHQ). The sequence is that of 3-dehydroquinate synthase from Enterobacter sp. (strain 638).